The following is a 486-amino-acid chain: MTSSDSGSAVPRLVIAAPSSGSGKTTVATGLMAALTARGLAVSPHKVGPDYIDPGYHALATGRVGRNLDAYLCGPELVGPLFLHGARGCDIAVVEGVMGLYDGAAGEGELASTAQVAKLLRAPVVLVVDASSQSRSVAALVHGFVSWDPEVRIGGVILNKVASDRHEALLREAVDSVGVPVLGVLRRAAPVETPSRHLGLVPVAERGSDAVDAVAAMGARVADGCDLEALVGLARSTGALSCAAWDAGEALVSSPPPPLPVPSPGAAPPDPLVRPGRPRPQAPDGLRRRVAMASGAAFTFSYAEHTELLAAAGAEVVTFDPLRDEELPEGTQGLVIGGGFPEVYASELSANEGLRKSVAELAFSGAPVAAECAGLLYLCRELDGLPMCGVLDAAARMSKRLTLGYRDAVAVSDSALAVAGTRMRGHEFHRTVVEPGAGAAPAWGMRAPERRVEGFVERGVHASYLHTHWAAEPGVARRFVERCRTS.

Over residues 254–272 the composition is skewed to pro residues; it reads SPPPPLPVPSPGAAPPDPL. The disordered stretch occupies residues 254-284; the sequence is SPPPPLPVPSPGAAPPDPLVRPGRPRPQAPD. A GATase cobBQ-type domain is found at 289–474; it reads RVAMASGAAF…LHTHWAAEPG (186 aa). C372 acts as the Nucleophile in catalysis.

The protein belongs to the CobB/CbiA family. It depends on Mg(2+) as a cofactor.

It carries out the reaction hydrogenobyrinate + 2 L-glutamine + 2 ATP + 2 H2O = hydrogenobyrinate a,c-diamide + 2 L-glutamate + 2 ADP + 2 phosphate + 2 H(+). Its pathway is cofactor biosynthesis; adenosylcobalamin biosynthesis; cob(II)yrinate a,c-diamide from precorrin-2 (aerobic route): step 9/10. Catalyzes the ATP-dependent amidation of the two carboxylate groups at positions a and c of hydrogenobyrinate, using either L-glutamine or ammonia as the nitrogen source. The chain is Hydrogenobyrinate a,c-diamide synthase from Streptomyces coelicolor (strain ATCC BAA-471 / A3(2) / M145).